We begin with the raw amino-acid sequence, 230 residues long: Urease accessory protein UreF (230 aa).

It belongs to the UreF family. In terms of assembly, ureD, UreF and UreG form a complex that acts as a GTP-hydrolysis-dependent molecular chaperone, activating the urease apoprotein by helping to assemble the nickel containing metallocenter of UreC. The UreE protein probably delivers the nickel.

It is found in the cytoplasm. Functionally, required for maturation of urease via the functional incorporation of the urease nickel metallocenter. This is Urease accessory protein UreF from Cupriavidus taiwanensis (strain DSM 17343 / BCRC 17206 / CCUG 44338 / CIP 107171 / LMG 19424 / R1) (Ralstonia taiwanensis (strain LMG 19424)).